The chain runs to 188 residues: dCTP deaminase (188 aa).

Residues 111–116 (KSTYAR), 135–137 (TLE), glutamine 156, tyrosine 170, and glutamine 180 each bind dCTP. Glutamate 137 acts as the Proton donor/acceptor in catalysis.

Belongs to the dCTP deaminase family. Homotrimer.

The catalysed reaction is dCTP + H2O + H(+) = dUTP + NH4(+). The protein operates within pyrimidine metabolism; dUMP biosynthesis; dUMP from dCTP (dUTP route): step 1/2. Functionally, catalyzes the deamination of dCTP to dUTP. In Azotobacter vinelandii (strain DJ / ATCC BAA-1303), this protein is dCTP deaminase.